The following is a 173-amino-acid chain: Mesogenin-1 (173 aa).

Positions 39–68 are enriched in polar residues; the sequence is ESYSLSQTPSPQSVSPAASYESTYSSSPHT. 2 disordered regions span residues 39 to 69 and 96 to 117; these read ESYSLSQTPSPQSVSPAASYESTYSSSPHTG and TKKDHGHKTSMTTHRRRKASER. Over residues 99–114 the composition is skewed to basic residues; it reads DHGHKTSMTTHRRRKA. One can recognise a bHLH domain in the interval 109-163; the sequence is HRRRKASEREKLRMRAIAEALHTLRNNLPPMYSQGRQPLTKIQTLKCTINYISEL.

Its subcellular location is the nucleus. Functionally, involved in specifying the paraxial, but not dorsal, mesoderm. May regulate the expression of T-box transcription factors required for mesoderm formation and differentiation, such as brachyury T, wnt8, vegt and eomes. This chain is Mesogenin-1 (msgn1), found in Xenopus laevis (African clawed frog).